A 470-amino-acid polypeptide reads, in one-letter code: Glutamate--tRNA ligase (470 aa).

The 'HIGH' region signature appears at 12-22 (PSPTGIFHVGG). 4 residues coordinate Zn(2+): C103, C105, C125, and D127. The short motif at 236–240 (KLSKR) is the 'KMSKS' region element. Residue K239 coordinates ATP.

The protein belongs to the class-I aminoacyl-tRNA synthetase family. Glutamate--tRNA ligase type 1 subfamily. Monomer. Requires Zn(2+) as cofactor.

It is found in the cytoplasm. It carries out the reaction tRNA(Glu) + L-glutamate + ATP = L-glutamyl-tRNA(Glu) + AMP + diphosphate. Functionally, catalyzes the attachment of glutamate to tRNA(Glu) in a two-step reaction: glutamate is first activated by ATP to form Glu-AMP and then transferred to the acceptor end of tRNA(Glu). This is Glutamate--tRNA ligase from Frankia casuarinae (strain DSM 45818 / CECT 9043 / HFP020203 / CcI3).